The chain runs to 195 residues: CASP-like protein Os03g0196400 (195 aa).

At 1-38 (MRQQQAGGVGDGVSPGNVPVCYYGPGGRVPSSLERRAR) the chain is on the cytoplasmic side. A helical membrane pass occupies residues 39 to 59 (AAEVLLRCAACGLAVLAAALL). Over 60 to 81 (GADRQTRVFFSIQKVARYTDMQ) the chain is Extracellular. The chain crosses the membrane as a helical span at residues 82–102 (SLVLLVIANGMAACYSLIQCA). The Cytoplasmic portion of the chain corresponds to 103–104 (RC). The helical transmembrane segment at 105–125 (LVMAYIVISAVAAAMEAALIG) threads the bilayer. The Extracellular segment spans residues 126 to 150 (KYGQPEFQWMKTCHLYKRFCAQAGG). The chain crosses the membrane as a helical span at residues 151–171 (GVACAIAASVNMVGVALISAF). Over 172–195 (NLFRLYGNSNGGGKATTTTMAGGK) the chain is Cytoplasmic.

It belongs to the Casparian strip membrane proteins (CASP) family. Homodimer and heterodimers.

The protein localises to the cell membrane. This Oryza sativa subsp. japonica (Rice) protein is CASP-like protein Os03g0196400.